A 254-amino-acid polypeptide reads, in one-letter code: MVIANSNIIFVAGLGGIGLDTSREIVKSGPKNLVLLDRIDNPAAIAELSALNPKVTVTFYPYDVTVPLDETKKLLKTIFDKLKTVDLLINGAGILDDNQIERTIAVNFTGTVNTTTAIMDFWDKRKGGPGGVVANICSVTGFNSIYQVPVYSASKAAALSFTTSFRKLAGITGVTAYSINPGITKTVLVHKFNSWLGVEPRVAELLLEHPTQTTLQCGQNFVKAIEANQNGAIWKLDLGRLDAIEWTKHWDSGI.

10-33 (FVAGLGGIGLDTSREIVKSGPKNL) contributes to the NAD(+) binding site. Ser138 lines the substrate pocket. Tyr151 (proton acceptor) is an active-site residue.

The protein belongs to the short-chain dehydrogenases/reductases (SDR) family. In terms of assembly, homodimer.

The enzyme catalyses a primary alcohol + NAD(+) = an aldehyde + NADH + H(+). It catalyses the reaction a secondary alcohol + NAD(+) = a ketone + NADH + H(+). This is Alcohol dehydrogenase (Adh) from Drosophila adiastola (Fruit fly).